Consider the following 456-residue polypeptide: tRNA-2-methylthio-N(6)-dimethylallyladenosine synthase (456 aa).

In terms of domain architecture, MTTase N-terminal spans 1 to 116; that stretch reads MTYFFETYGC…FESIFQEIEQ (116 aa). [4Fe-4S] cluster contacts are provided by C10, C46, C79, C162, C166, and C169. The 237-residue stretch at 148 to 384 folds into the Radical SAM core domain; that stretch reads SEGSFQSFIP…IALQMSTTLK (237 aa). The TRAM domain occupies 387 to 452; that stretch reads RARVGKTLPV…GRTLRAHLVQ (66 aa).

Belongs to the methylthiotransferase family. MiaB subfamily. As to quaternary structure, monomer. The cofactor is [4Fe-4S] cluster.

The protein resides in the cytoplasm. It catalyses the reaction N(6)-dimethylallyladenosine(37) in tRNA + (sulfur carrier)-SH + AH2 + 2 S-adenosyl-L-methionine = 2-methylsulfanyl-N(6)-dimethylallyladenosine(37) in tRNA + (sulfur carrier)-H + 5'-deoxyadenosine + L-methionine + A + S-adenosyl-L-homocysteine + 2 H(+). Functionally, catalyzes the methylthiolation of N6-(dimethylallyl)adenosine (i(6)A), leading to the formation of 2-methylthio-N6-(dimethylallyl)adenosine (ms(2)i(6)A) at position 37 in tRNAs that read codons beginning with uridine. The chain is tRNA-2-methylthio-N(6)-dimethylallyladenosine synthase from Treponema pallidum (strain Nichols).